Consider the following 292-residue polypeptide: MQVPKCEICDDDFSSEEDGDHNPRNLKCSHTLCEGCIKKLLKNGRVVCPFCREPTEVPVYNIKSLHKNFSLIQMIKIVTKTTEVEKNWDNFPPKCVEHPYNVAEFACIESNCSSKNKLMCQTCEEFGAHKGHAKELLITKTDKFRKKLEFWINQLKLNIQNCTVKKNELEEAVVKSEQLLNIKVKKIKNHFDKIRQSVDKKEKGIIDETTAEATRIQKFNNEKITYLIDLQARHVKDIEAIEKQKNMTDIDLYNTGIDLPCFFGHLNIEVFRPADTKEMDIKLPNFKFEDGS.

An RING-type zinc finger spans residues 6–52 (CEICDDDFSSEEDGDHNPRNLKCSHTLCEGCIKKLLKNGRVVCPFCR). The segment at 90 to 137 (NFPPKCVEHPYNVAEFACIESNCSSKNKLMCQTCEEFGAHKGHAKELL) adopts a B box-type zinc-finger fold. Positions 95, 98, 123, and 129 each coordinate Zn(2+). Residues 152 to 179 (INQLKLNIQNCTVKKNELEEAVVKSEQL) are a coiled coil.

Belongs to the TRIM/RBCC family. In terms of assembly, interacts with E2 ubiquitin-conjugating enzyme ubc-21. Interacts with ced-6; this mediates interaction of trim-21 with ced-1 and is required for ced-1 ubiquitination. Interacts with nck-1; the interaction is required for ced-1 ubiquitination. In early larva, observed mainly in pharyngeal and body wall muscle cells.

Its subcellular location is the cytoplasm. The catalysed reaction is S-ubiquitinyl-[E2 ubiquitin-conjugating enzyme]-L-cysteine + [acceptor protein]-L-lysine = [E2 ubiquitin-conjugating enzyme]-L-cysteine + N(6)-ubiquitinyl-[acceptor protein]-L-lysine.. It functions in the pathway protein modification; protein ubiquitination. Functionally, E3 ubiquitin-protein ligase which catalyzes 'Lys-48'-linked polyubiquitination of ced-1, promoting its proteasomal degradation to maintain appropriate ced-1 levels for apoptotic cell clearance. Acts together with E2 ubiquitin-conjugating enzyme ubc-21. In Caenorhabditis elegans, this protein is E3 ubiquitin-protein ligase trim-21.